The sequence spans 167 residues: 3-isopropylmalate dehydratase small subunit (167 aa).

It belongs to the LeuD family. LeuD type 2 subfamily. As to quaternary structure, heterodimer of LeuC and LeuD.

The catalysed reaction is (2R,3S)-3-isopropylmalate = (2S)-2-isopropylmalate. Its pathway is amino-acid biosynthesis; L-leucine biosynthesis; L-leucine from 3-methyl-2-oxobutanoate: step 2/4. In terms of biological role, catalyzes the isomerization between 2-isopropylmalate and 3-isopropylmalate, via the formation of 2-isopropylmaleate. In Oleidesulfovibrio alaskensis (strain ATCC BAA-1058 / DSM 17464 / G20) (Desulfovibrio alaskensis), this protein is 3-isopropylmalate dehydratase small subunit.